The primary structure comprises 339 residues: DNA-directed RNA polymerase subunit alpha (339 aa).

The segment at 1-235 is alpha N-terminal domain (alpha-NTD); that stretch reads MTIQKNWQEL…DQLNVFVNFE (235 aa). Positions 251-339 are alpha C-terminal domain (alpha-CTD); sequence FNPAFLKKVD…ELAKRFEDHY (89 aa).

The protein belongs to the RNA polymerase alpha chain family. Homodimer. The RNAP catalytic core consists of 2 alpha, 1 beta, 1 beta' and 1 omega subunit. When a sigma factor is associated with the core the holoenzyme is formed, which can initiate transcription.

It catalyses the reaction RNA(n) + a ribonucleoside 5'-triphosphate = RNA(n+1) + diphosphate. DNA-dependent RNA polymerase catalyzes the transcription of DNA into RNA using the four ribonucleoside triphosphates as substrates. In Rhodopseudomonas palustris (strain BisA53), this protein is DNA-directed RNA polymerase subunit alpha.